We begin with the raw amino-acid sequence, 154 residues long: Nascent polypeptide-associated complex subunit beta (154 aa).

The NAC-A/B domain occupies 33–98 (EQDDTKLIEA…PQEKNVTQLI (66 aa)). Positions 125–154 (APTELNAGAPAGGDEGIPDLIDGEKFDEVE) are disordered.

This sequence belongs to the NAC-beta family. As to quaternary structure, part of the nascent polypeptide-associated complex (NAC), consisting of EGD2 and EGD1. NAC associates with ribosomes via EGD1.

The protein localises to the cytoplasm. Its subcellular location is the nucleus. Functionally, component of the nascent polypeptide-associated complex (NAC), a dynamic component of the ribosomal exit tunnel, protecting the emerging polypeptides from interaction with other cytoplasmic proteins to ensure appropriate nascent protein targeting. The NAC complex also promotes mitochondrial protein import by enhancing productive ribosome interactions with the outer mitochondrial membrane and blocks the inappropriate interaction of ribosomes translating non-secretory nascent polypeptides with translocation sites in the membrane of the endoplasmic reticulum. EGD1 may act as a transcription factor that exert a negative effect on the expression of several genes that are transcribed by RNA polymerase II. In Scheffersomyces stipitis (strain ATCC 58785 / CBS 6054 / NBRC 10063 / NRRL Y-11545) (Yeast), this protein is Nascent polypeptide-associated complex subunit beta (EGD1).